The chain runs to 96 residues: Protein RnfH (96 aa).

Belongs to the UPF0125 (RnfH) family.

This chain is Protein RnfH, found in Citrobacter koseri (strain ATCC BAA-895 / CDC 4225-83 / SGSC4696).